The primary structure comprises 503 residues: Aromatase (503 aa).

Residues D309 and M374 each coordinate substrate. C437 is a heme binding site.

This sequence belongs to the cytochrome P450 family. Requires heme as cofactor.

The protein localises to the membrane. It carries out the reaction testosterone + 3 reduced [NADPH--hemoprotein reductase] + 3 O2 = 17beta-estradiol + formate + 3 oxidized [NADPH--hemoprotein reductase] + 4 H2O + 4 H(+). The enzyme catalyses androst-4-ene-3,17-dione + 3 reduced [NADPH--hemoprotein reductase] + 3 O2 = estrone + formate + 3 oxidized [NADPH--hemoprotein reductase] + 4 H2O + 4 H(+). Catalyzes the formation of aromatic C18 estrogens from C19 androgens. This chain is Aromatase (CYP19A1), found in Callithrix jacchus (White-tufted-ear marmoset).